The primary structure comprises 706 residues: Parasporal crystal protein Cry18Aa (706 aa).

Belongs to the delta endotoxin family.

Functionally, binds to the brush border membrane vesicles of scarab larvae and somehow damages the gut wall to allow the vegetative cells of P.popilliae to enter the hemolymph. Active on M.melolontha. The protein is Parasporal crystal protein Cry18Aa (cry18Aa) of Paenibacillus popilliae (Bacillus popilliae).